A 290-amino-acid chain; its full sequence is ATP synthase gamma chain (290 aa).

The protein belongs to the ATPase gamma chain family. F-type ATPases have 2 components, CF(1) - the catalytic core - and CF(0) - the membrane proton channel. CF(1) has five subunits: alpha(3), beta(3), gamma(1), delta(1), epsilon(1). CF(0) has three main subunits: a, b and c.

The protein resides in the cell inner membrane. In terms of biological role, produces ATP from ADP in the presence of a proton gradient across the membrane. The gamma chain is believed to be important in regulating ATPase activity and the flow of protons through the CF(0) complex. The polypeptide is ATP synthase gamma chain (Dictyoglomus turgidum (strain DSM 6724 / Z-1310)).